Consider the following 331-residue polypeptide: Centriolar satellite-associated tubulin polyglutamylase complex regulator 1 (331 aa).

The required for interaction with PCM1 stretch occupies residues 1–111; the sequence is MLSPERLALP…HCLLQLLCPD (111 aa). Positions 1–225 are required for interaction with TPGS1, LRRC49, and TTLL1; the sequence is MLSPERLALP…SCPPPALVKE (225 aa). Positions 112–331 are required for interaction with TPGS2; the sequence is FPLELTQKAA…STEETDESET (220 aa). Residues 292 to 331 form a disordered region; it reads SCLPSRTPPRVGSPWKPLHRSRKLDAESDGSTEETDESET. Residues 318–331 are compositionally biased toward acidic residues; the sequence is ESDGSTEETDESET. Serine 319 bears the Phosphoserine mark.

Belongs to the CSTPP1 family. Interacts with PCM1. Interacts with TTLL1, TPGS1, TPGS2 and LRRC49; the interactions link CSTPP1 to the complex TPGC. Binds to alpha-tubulin.

It localises to the cytoplasm. The protein resides in the cytoskeleton. Its subcellular location is the microtubule organizing center. It is found in the centrosome. The protein localises to the centriolar satellite. Functionally, regulator of the tubulin polyglutamylase complex (TPGC) that controls cytoskeletal organization, nuclear shape, and cilium disassembly by balancing microtubule and actin assembly. Regulates the assembly and stability of the TPGC and thereby modulates polyglutamylation of the microtubule, which antagonizes MAP4 binding. This chain is Centriolar satellite-associated tubulin polyglutamylase complex regulator 1 (Cstpp1), found in Rattus norvegicus (Rat).